Here is a 445-residue protein sequence, read N- to C-terminus: UDP-N-acetylmuramate--L-alanine ligase (445 aa).

113 to 119 is an ATP binding site; the sequence is GSHGKTS.

The protein belongs to the MurCDEF family.

It localises to the cytoplasm. The enzyme catalyses UDP-N-acetyl-alpha-D-muramate + L-alanine + ATP = UDP-N-acetyl-alpha-D-muramoyl-L-alanine + ADP + phosphate + H(+). It participates in cell wall biogenesis; peptidoglycan biosynthesis. Cell wall formation. This Enterococcus faecalis (strain ATCC 700802 / V583) protein is UDP-N-acetylmuramate--L-alanine ligase.